The following is a 527-amino-acid chain: Glutamate--cysteine ligase (527 aa).

This sequence belongs to the glutamate--cysteine ligase type 1 family. Type 1 subfamily.

It carries out the reaction L-cysteine + L-glutamate + ATP = gamma-L-glutamyl-L-cysteine + ADP + phosphate + H(+). Its pathway is sulfur metabolism; glutathione biosynthesis; glutathione from L-cysteine and L-glutamate: step 1/2. The protein is Glutamate--cysteine ligase of Pseudomonas aeruginosa (strain UCBPP-PA14).